We begin with the raw amino-acid sequence, 143 residues long: Transcription antitermination protein NusB (143 aa).

The protein belongs to the NusB family.

Functionally, involved in transcription antitermination. Required for transcription of ribosomal RNA (rRNA) genes. Binds specifically to the boxA antiterminator sequence of the ribosomal RNA (rrn) operons. This chain is Transcription antitermination protein NusB, found in Clostridium botulinum (strain ATCC 19397 / Type A).